Consider the following 103-residue polypeptide: Large ribosomal subunit protein bL21 (103 aa).

This sequence belongs to the bacterial ribosomal protein bL21 family. As to quaternary structure, part of the 50S ribosomal subunit. Contacts protein L20.

This protein binds to 23S rRNA in the presence of protein L20. The chain is Large ribosomal subunit protein bL21 from Shewanella sp. (strain MR-7).